A 503-amino-acid polypeptide reads, in one-letter code: Maturase K (503 aa).

It belongs to the intron maturase 2 family. MatK subfamily.

The protein resides in the plastid. It is found in the chloroplast. Usually encoded in the trnK tRNA gene intron. Probably assists in splicing its own and other chloroplast group II introns. In Syzygium australe (Brush cherry), this protein is Maturase K.